Reading from the N-terminus, the 877-residue chain is Alanine--tRNA ligase (877 aa).

Zn(2+)-binding residues include H567, H571, C669, and H673.

Belongs to the class-II aminoacyl-tRNA synthetase family. Requires Zn(2+) as cofactor.

It localises to the cytoplasm. The catalysed reaction is tRNA(Ala) + L-alanine + ATP = L-alanyl-tRNA(Ala) + AMP + diphosphate. Its function is as follows. Catalyzes the attachment of alanine to tRNA(Ala) in a two-step reaction: alanine is first activated by ATP to form Ala-AMP and then transferred to the acceptor end of tRNA(Ala). Also edits incorrectly charged Ser-tRNA(Ala) and Gly-tRNA(Ala) via its editing domain. The protein is Alanine--tRNA ligase of Rickettsia rickettsii (strain Iowa).